A 307-amino-acid polypeptide reads, in one-letter code: Oxygen-dependent coproporphyrinogen-III oxidase (307 aa).

S99 provides a ligand contact to substrate. A divalent metal cation-binding residues include H103 and H113. H113 serves as the catalytic Proton donor. 115–117 provides a ligand contact to substrate; the sequence is NVR. Positions 152 and 182 each coordinate a divalent metal cation. Residues 247–282 are important for dimerization; that stretch reads YVEFNLVFDRGTLFGLQSGGRTESILMSMPPVVNWR. 265–267 contacts substrate; that stretch reads GGR.

It belongs to the aerobic coproporphyrinogen-III oxidase family. As to quaternary structure, homodimer. The cofactor is a divalent metal cation.

It is found in the cytoplasm. The catalysed reaction is coproporphyrinogen III + O2 + 2 H(+) = protoporphyrinogen IX + 2 CO2 + 2 H2O. It functions in the pathway porphyrin-containing compound metabolism; protoporphyrin-IX biosynthesis; protoporphyrinogen-IX from coproporphyrinogen-III (O2 route): step 1/1. Involved in the heme biosynthesis. Catalyzes the aerobic oxidative decarboxylation of propionate groups of rings A and B of coproporphyrinogen-III to yield the vinyl groups in protoporphyrinogen-IX. The chain is Oxygen-dependent coproporphyrinogen-III oxidase from Paraburkholderia xenovorans (strain LB400).